A 430-amino-acid polypeptide reads, in one-letter code: Transcription factor E2F1 (430 aa).

The tract at residues 62–103 is cyclin A:CDK2 binding; it reads ATPQAPRPAPSAPRPALGRPPVKRRLDLETDHQYLAGSSGPF. Residues 84-186 are interaction with BIRC2/c-IAP1; it reads KRRLDLETDH…KKSKNHIQWL (103 aa). A disordered region spans residues 95–123; that stretch reads YLAGSSGPFRGRGRHPGKGVKSPGEKSRY. The DNA-binding element occupies 105 to 189; it reads GRGRHPGKGV…KNHIQWLGSH (85 aa). N6-acetyllysine is present on residues Lys112, Lys115, and Lys120. Residues 148–169 are leucine-zipper; that stretch reads LNWAAEVLKVQKRRIYDITNVL. The DEF box motif lies at 153–189; the sequence is EVLKVQKRRIYDITNVLEGIQLIAKKSKNHIQWLGSH. An N6-methyllysine; by SETD7 modification is found at Lys180. Positions 187 to 375 are required for interaction with TRIM28; that stretch reads GSHTMVGIGK…QLSPLVAADS (189 aa). The segment at 190–279 is dimerization; sequence TMVGIGKRLE…AVDSSETFQI (90 aa). Residues 294 to 340 are disordered; it reads PEESADGISPGKTSCQETSSGEDRTADSGPAGPPPSPPSTSPALDPS. Over residues 324–333 the composition is skewed to pro residues; that stretch reads AGPPPSPPST. A transactivation region spans residues 361–430; it reads PMEEDQLSPL…DFGDLTPLDF (70 aa). Phosphoserine is present on residues Ser368 and Ser396. The RB1 binding stretch occupies residues 402-419; the sequence is LDYHFGLEEGEGIRDLFD. Thr426 carries the phosphothreonine modification.

Belongs to the E2F/DP family. As to quaternary structure, component of the DRTF1/E2F transcription factor complex. Forms heterodimers with DP family members. The E2F1 complex binds specifically hypophosphorylated RB1, the interaction represses E2F1-driven transcription. During the cell cycle, RB1 becomes phosphorylated in mid-to-late G1 phase, detaches from the DRTF1/E2F complex, rendering E2F transcriptionally active. Interacts with TRRAP, which probably mediates its interaction with histone acetyltransferase complexes, leading to transcription activation. Binds TOPBP1 and EAPP. Interacts with ARID3A. Interacts with TRIM28; the interaction inhibits E2F1 acetylation through recruiting HDAC1 and represses its transcriptional activity. Interaction with KAT2B; the interaction acetylates E2F1 enhancing its DNA-binding and transcriptional activity. Interacts with BIRC2/c-IAP1 (via BIR domains). The complex TFDP1:E2F1 interacts with CEBPA; the interaction prevents CEBPA binding to target genes promoters and represses its transcriptional activity. Interacts with RRP1B. Interacts with HCFC1. Interacts with KMT2E; the interaction is probably indirect and is mediated via HCFC1. Interacts with DCAF5 and L3MBTL3; the interaction requires methylation at Lys-180 and is necessary to target E2F1 for ubiquitination by the CRL4-DCAF5 E3 ubiquitin ligase complex. Phosphorylated by CDK2 and cyclin A-CDK2 in the S-phase. Phosphorylation by CHEK2 stabilizes E2F1 upon DNA damage and regulates its effect on transcription and apoptosis. Phosphorylation at Ser-396 by GSK3B promotes interaction with USP11, leading to its deubiquitination and stabilization. In terms of processing, ubiquitinated via 'Lys-63'-linked ubiquitin, leading to its degradation. Deubiquitinated by USP11 following phosphorylation by GSK3B, promoting its stability. Post-translationally, acetylation stimulates DNA-binding. Enhanced under stress conditions such as DNA damage and inhibited by retinoblastoma protein RB1. Regulated by KAP1/TRIM28 which recruits HDAC1 to E2F1 resulting in deacetylation. Acetylated by P/CAF/KAT2B. Methylation at Lys-180 by SETD7 promotes E2F1 ubiquitin-dependent proteasomal degradation.

Its subcellular location is the nucleus. Its activity is regulated as follows. BIRC2/c-IAP1 stimulates its transcriptional activity. Its function is as follows. Transcription activator that binds DNA cooperatively with DP proteins through the E2 recognition site, 5'-TTTC[CG]CGC-3' found in the promoter region of a number of genes whose products are involved in cell cycle regulation or in DNA replication. The DRTF1/E2F complex functions in the control of cell-cycle progression from G1 to S phase. E2F1 binds preferentially RB1 in a cell-cycle dependent manner. It can mediate both cell proliferation and TP53/p53-dependent apoptosis. Blocks adipocyte differentiation by binding to specific promoters repressing CEBPA binding to its target gene promoters. Directly activates transcription of PEG10. Positively regulates transcription of RRP1B. In Mus musculus (Mouse), this protein is Transcription factor E2F1.